We begin with the raw amino-acid sequence, 419 residues long: Gamma-glutamyl phosphate reductase (419 aa).

It belongs to the gamma-glutamyl phosphate reductase family.

It localises to the cytoplasm. The enzyme catalyses L-glutamate 5-semialdehyde + phosphate + NADP(+) = L-glutamyl 5-phosphate + NADPH + H(+). Its pathway is amino-acid biosynthesis; L-proline biosynthesis; L-glutamate 5-semialdehyde from L-glutamate: step 2/2. Functionally, catalyzes the NADPH-dependent reduction of L-glutamate 5-phosphate into L-glutamate 5-semialdehyde and phosphate. The product spontaneously undergoes cyclization to form 1-pyrroline-5-carboxylate. This Ruthia magnifica subsp. Calyptogena magnifica protein is Gamma-glutamyl phosphate reductase.